Here is a 156-residue protein sequence, read N- to C-terminus: Ribosomal RNA large subunit methyltransferase H (156 aa).

S-adenosyl-L-methionine contacts are provided by residues Leu-73, Gly-104, and 123-128; that span reads IGPLTL.

Belongs to the RNA methyltransferase RlmH family. As to quaternary structure, homodimer.

Its subcellular location is the cytoplasm. It catalyses the reaction pseudouridine(1915) in 23S rRNA + S-adenosyl-L-methionine = N(3)-methylpseudouridine(1915) in 23S rRNA + S-adenosyl-L-homocysteine + H(+). In terms of biological role, specifically methylates the pseudouridine at position 1915 (m3Psi1915) in 23S rRNA. The polypeptide is Ribosomal RNA large subunit methyltransferase H (Stenotrophomonas maltophilia (strain R551-3)).